Reading from the N-terminus, the 367-residue chain is MAKMINKTLVLTYIYLLIYIILSSGVILYNKWVLSPKYFNFPLPITLTMIHMGFSGFVAFLLIRVFKVVSPVKMTFEIYVTCVVPISAFFASSLWFGNTAYLHISVAFIQMLKALMPVATFLMAVVCGTDKARCDVFMNMVLVSVGVVVSSYGEINFNVIGTVYQVMGIFAEALRLVLTQVLLQKKGLTLNPVTSLYYIAPCSFVFLSLPWYVLEKPNIDVSQIQFNFWIFFSNALCALALNFSIFLVIGRTGAVTIRVAGVLKDWILIALSTVIFPESTITGLNITGYAIALCGVVMYNYIKIKDVKAIQPTTDSLPDRITKDWKEKNSSDGGSPRGLELNDEEAPLITSRLSHIGRTQLGNHTAV.

The next 10 helical transmembrane spans lie at 9-29, 43-63, 76-96, 106-126, 140-160, 163-183, 193-213, 229-249, 257-276, and 280-302; these read LVLTYIYLLIYIILSSGVILY, LPITLTMIHMGFSGFVAFLLI, FEIYVTCVVPISAFFASSLWF, VAFIQMLKALMPVATFLMAVV, MVLVSVGVVVSSYGEINFNVI, VYQVMGIFAEALRLVLTQVLL, VTSLYYIAPCSFVFLSLPWYV, WIFFSNALCALALNFSIFLVI, IRVAGVLKDWILIALSTVIF, and TITGLNITGYAIALCGVVMYNYI. Basic and acidic residues predominate over residues 321–330; the sequence is ITKDWKEKNS. Positions 321–341 are disordered; sequence ITKDWKEKNSSDGGSPRGLEL.

It belongs to the TPT transporter family. TPT (TC 2.A.7.9) subfamily.

The protein resides in the membrane. In Arabidopsis thaliana (Mouse-ear cress), this protein is Probable sugar phosphate/phosphate translocator At1g48230.